We begin with the raw amino-acid sequence, 389 residues long: Calreticulin (389 aa).

The signal sequence occupies residues 1-13 (MFTLFLLIALSSA). The N-domain stretch occupies residues 12–189 (SAKVYFHETF…GVEKQEGKFD (178 aa)). Ca(2+) contacts are provided by T20, N52, and N53. A disulfide bridge links C96 with C130. Residues Y100, K102, Y121, and D128 each coordinate an alpha-D-glucoside. 7 tandem repeats follow at residues 183-194 (KQEGKFDEDWDM), 202-213 (DPNVSKPADWVD), 219-230 (DPNDKKPEGWDD), 237-248 (DPNAKKPEEWND), 252-262 (GEWEAPTIENP), 266-276 (GEWKPKRIPNP), and 280-290 (GEWVHPQIANP). The segment at 183–248 (KQEGKFDEDW…NAKKPEEWND (66 aa)) is 4 X approximate repeats. Residues 190–301 (EDWDMLAPKE…YVYDPELYKY (112 aa)) are P-domain. A compositionally biased stretch (basic and acidic residues) spans 213 to 232 (DEKEIDDPNDKKPEGWDDIP). A disordered region spans residues 213 to 256 (DEKEIDDPNDKKPEGWDDIPKTIVDPNAKKPEEWNDEDDGEWEA). Residues 252-290 (GEWEAPTIENPEYKGEWKPKRIPNPAYKGEWVHPQIANP) are 3 X approximate repeats. Positions 302-389 (DSFAYIGIDV…IKKEENKEEL (88 aa)) are C-domain. D310 provides a ligand contact to an alpha-D-glucoside. D321 contacts Ca(2+). The stretch at 329 to 388 (IEEAEKEAKVILERNAAEKKMRDEIKEAEKQKEEEAKKEAEKQKEEETKEEIKKEENKEE) forms a coiled coil. The disordered stretch occupies residues 347 to 389 (KKMRDEIKEAEKQKEEEAKKEAEKQKEEETKEEIKKEENKEEL). A Prevents secretion from ER motif is present at residues 386–389 (KEEL).

This sequence belongs to the calreticulin family. Interacts (via C-terminus) with host C1q.

It is found in the endoplasmic reticulum lumen. The protein resides in the cell projection. It localises to the uropodium. Its subcellular location is the cell surface. The protein localises to the phagocytic cup. Functionally, molecular calcium-binding chaperone promoting folding, oligomeric assembly and quality control in the ER via the calreticulin/calnexin cycle. This lectin may interact transiently with almost all of the monoglucosylated glycoproteins that are synthesized in the ER. Plays a role in host cell phagocytosis, possibly by acting as a receptor for host C1q. Binding to C1q prevents the activation of the host classical complement pathway. Also, binds to apoptotic host cells independently of host C1q and collectins. In Entamoeba histolytica (strain ATCC 30459 / HM-1:IMSS / ABRM), this protein is Calreticulin.